An 83-amino-acid chain; its full sequence is Cytochrome b559 subunit alpha (83 aa).

Residues I21–W35 form a helical membrane-spanning segment. H23 serves as a coordination point for heme.

Heterodimer of an alpha subunit and a beta subunit. PSII is composed of 1 copy each of membrane proteins PsbA, PsbB, PsbC, PsbD, PsbE, PsbF, PsbH, PsbI, PsbJ, PsbK, PsbL, PsbM, PsbT, PsbX, PsbY, PsbZ, Psb30/Ycf12, at least 3 peripheral proteins of the oxygen-evolving complex and a large number of cofactors. It forms dimeric complexes. Requires heme b as cofactor.

It localises to the plastid. The protein resides in the chloroplast thylakoid membrane. Its function is as follows. This b-type cytochrome is tightly associated with the reaction center of photosystem II (PSII). PSII is a light-driven water:plastoquinone oxidoreductase that uses light energy to abstract electrons from H(2)O, generating O(2) and a proton gradient subsequently used for ATP formation. It consists of a core antenna complex that captures photons, and an electron transfer chain that converts photonic excitation into a charge separation. This chain is Cytochrome b559 subunit alpha, found in Pisum sativum (Garden pea).